A 1199-amino-acid chain; its full sequence is Ecdysone-induced protein 75B, isoforms C/D (1199 aa).

Residues 130-182 (TTDGPTAVLQQQQPQQQMPQHFESLPHHHPQQEHQPQQQQQQHHLQHHPHPHV) are disordered. Composition is skewed to low complexity over residues 139–149 (QQQQPQQQMPQ) and 162–172 (EHQPQQQQQQH). The segment at residues 242 to 318 (TVLCRVCGDK…VGMSRDAVRF (77 aa)) is a DNA-binding region (nuclear receptor). 2 NR C4-type zinc fingers span residues 245–265 (CRVCGDKASGFHYGVHSCEGC) and 282–306 (CTKNQQCSILRINRNRCQYCRLKKC). Positions 352–600 (DQPRLLAAVL…QQMWSMEDGN (249 aa)) constitute an NR LBD domain. 6 disordered regions span residues 624–665 (KSPL…SALA), 771–808 (LDSPTDSGIESGNEKNECKAVSSGGSSSCSSPRSSVDD), 831–851 (VSVSPVRSPQPSTSSHLKRQI), 895–961 (AEAD…SSHS), 991–1104 (ENST…SNSA), and 1155–1188 (VTVTASNGGPPSAAASPAPSSSPPASVGSPNPGL). Composition is skewed to low complexity over residues 641-653 (GSPSSSQPQGVSL), 792-804 (SSGGSSSCSSPRS), 831-845 (VSVSPVRSPQPSTSS), 897-942 (ADAS…AQSQ), and 950-961 (SSPKASMASSHS). Polar residues-rich tracts occupy residues 993-1006 (STAASSTTNGVGNR) and 1018-1040 (AVQNQQRWGSSSVITTTCQQRQQ). 3 stretches are compositionally biased toward low complexity: residues 1041–1077 (SVSPHSNGSSSSSSSSSSSSSSSSSTSSNCSSSSASS), 1086–1104 (STSNGTSAPASSSSGSNSA), and 1159–1187 (ASNGGPPSAAASPAPSSSPPASVGSPNPG).

It belongs to the nuclear hormone receptor family. NR1 subfamily.

The protein localises to the nucleus. Functionally, implicated in the regulation of ecdysone-triggered gene hierarchies. Probably plays a key role in mediating the regulation of the larval molt by 20-OH-ecdysone. This Drosophila melanogaster (Fruit fly) protein is Ecdysone-induced protein 75B, isoforms C/D (Eip75B).